The primary structure comprises 152 residues: Protein SprT-like (152 aa).

In terms of domain architecture, SprT-like spans Gln7–Pro147. His67 lines the Zn(2+) pocket. The active site involves Glu68. Residue His71 coordinates Zn(2+).

Belongs to the SprT family. Zn(2+) is required as a cofactor.

The protein localises to the cytoplasm. The chain is Protein SprT-like from Bacillus cereus (strain G9842).